Consider the following 333-residue polypeptide: MDVINLIKNLKQILRTANNERHLIELKNIFVKQHLLPLYDELKKSANKKEMGLLINNFKQQIEFVTDQILKELNDKDDQVDLKKWTNKTLFAPFINNGHHHILNSIIDDIASFFKKLNFEIVSGSEVVSPIYNFDHLNIDENHPARASADSFFINSIKMLRTHCTTTTAQFLENNVNKDIRIMSFGNVYRKDDDDATHSHQFNQVDFVWVKEGLTVANLKWLIDSLIKYLFGQNLKTRYRLSFFPFTEPSFEVDVQCFKCDLKGCAVCKKSTWIEIMGTGMLHENVLKAANINDIRTGMAFGVGIDRIAMLKYEIDDIRYLYSNNFKFNAQIK.

Glu-248 lines the Mg(2+) pocket.

This sequence belongs to the class-II aminoacyl-tRNA synthetase family. Phe-tRNA synthetase alpha subunit type 1 subfamily. Tetramer of two alpha and two beta subunits. Mg(2+) is required as a cofactor.

It is found in the cytoplasm. The catalysed reaction is tRNA(Phe) + L-phenylalanine + ATP = L-phenylalanyl-tRNA(Phe) + AMP + diphosphate + H(+). The sequence is that of Phenylalanine--tRNA ligase alpha subunit from Ureaplasma parvum serovar 3 (strain ATCC 27815 / 27 / NCTC 11736).